We begin with the raw amino-acid sequence, 188 residues long: dCTP deaminase (188 aa).

Residues 111 to 116 (KSTYAR), 135 to 137 (TLE), Gln-156, Tyr-170, and Gln-180 contribute to the dCTP site. Residue Glu-137 is the Proton donor/acceptor of the active site.

It belongs to the dCTP deaminase family. In terms of assembly, homotrimer.

The enzyme catalyses dCTP + H2O + H(+) = dUTP + NH4(+). It functions in the pathway pyrimidine metabolism; dUMP biosynthesis; dUMP from dCTP (dUTP route): step 1/2. Catalyzes the deamination of dCTP to dUTP. The protein is dCTP deaminase of Pseudomonas putida (strain ATCC 700007 / DSM 6899 / JCM 31910 / BCRC 17059 / LMG 24140 / F1).